The chain runs to 1322 residues: Protein fantom (1322 aa).

A signal peptide spans 1 to 22 (MVSARYPIEKWSRPQLEDHFHN). The stretch at 15 to 89 (QLEDHFHNVV…MKLKAAKQQL (75 aa)) forms a coiled coil. Residues 108 to 119 (RSTFRQPPSTFR) show a composition bias toward polar residues. 3 disordered regions span residues 108-151 (RSTF…GEKL), 189-275 (KSSV…PDQT), and 392-418 (RIEE…SQSE). Low complexity predominate over residues 195-217 (SSPPTRLSTSSSSKSSSSNNNND). The segment covering 224–234 (ELEEMSEMSDD) has biased composition (acidic residues). Residues 274–362 (QTEKVLLDKL…EDQKKFEAMR (89 aa)) are a coiled coil. Positions 456-538 (ASENSLARWQ…FMLEEQIRTI (83 aa)) form a coiled coil. Disordered stretches follow at residues 891–1094 (AELH…KPRN) and 1121–1149 (TDPL…PVPL). Low complexity predominate over residues 918–927 (TDSSDTSFSH). The span at 956 to 975 (SDGEEEADRIVFDDDDDEIE) shows a compositional bias: acidic residues. The span at 984-996 (RDPEPLEVPERQV) shows a compositional bias: basic and acidic residues. Residues 1015–1029 (NGTNESKESTPVTQR) show a composition bias toward polar residues. Residues 1042–1067 (PELEPESGPEPEPVVESEPNEVAETE) show a composition bias toward acidic residues. Residues 1068–1080 (EDRKRELKTEELK) show a composition bias toward basic and acidic residues. Positions 1127–1139 (SVPPSESSSTSSP) are enriched in low complexity.

It belongs to the RPGRIP1 family. As to expression, expressed at the transition zone at the base of cilia. Expressed in ciliated sensory neurons, including the amphid neurons in the head.

It is found in the cell projection. Its subcellular location is the cilium. In terms of biological role, thought to have an important role in cilia formation and cilia-mediated chemosensation. Involved in the docking of other MKS/MKSR proteins localized to the transition zone of the cilia. The polypeptide is Protein fantom (mks-5) (Caenorhabditis elegans).